Here is a 558-residue protein sequence, read N- to C-terminus: Dihydroxy-acid dehydratase (558 aa).

Cys-51 provides a ligand contact to [2Fe-2S] cluster. Asp-83 contributes to the Mg(2+) binding site. Residue Cys-124 participates in [2Fe-2S] cluster binding. The Mg(2+) site is built by Asp-125 and Lys-126. Position 126 is an N6-carboxylysine (Lys-126). Cys-196 contacts [2Fe-2S] cluster. Residue Glu-447 coordinates Mg(2+). Catalysis depends on Ser-473, which acts as the Proton acceptor.

It belongs to the IlvD/Edd family. As to quaternary structure, homodimer. [2Fe-2S] cluster serves as cofactor. Requires Mg(2+) as cofactor.

The catalysed reaction is (2R)-2,3-dihydroxy-3-methylbutanoate = 3-methyl-2-oxobutanoate + H2O. It catalyses the reaction (2R,3R)-2,3-dihydroxy-3-methylpentanoate = (S)-3-methyl-2-oxopentanoate + H2O. It participates in amino-acid biosynthesis; L-isoleucine biosynthesis; L-isoleucine from 2-oxobutanoate: step 3/4. The protein operates within amino-acid biosynthesis; L-valine biosynthesis; L-valine from pyruvate: step 3/4. Functions in the biosynthesis of branched-chain amino acids. Catalyzes the dehydration of (2R,3R)-2,3-dihydroxy-3-methylpentanoate (2,3-dihydroxy-3-methylvalerate) into 2-oxo-3-methylpentanoate (2-oxo-3-methylvalerate) and of (2R)-2,3-dihydroxy-3-methylbutanoate (2,3-dihydroxyisovalerate) into 2-oxo-3-methylbutanoate (2-oxoisovalerate), the penultimate precursor to L-isoleucine and L-valine, respectively. In Flavobacterium psychrophilum (strain ATCC 49511 / DSM 21280 / CIP 103535 / JIP02/86), this protein is Dihydroxy-acid dehydratase.